Here is a 210-residue protein sequence, read N- to C-terminus: MILVFIGPPGSGKGTQASLLSEKFSIISVGKVLRTVMESNTAEADVVKKFIKSGKLVPSNITNKIVVNALKNIEQCKSIILDGYPRDIFQADFLQENLQMDFKVLFFDIDDAVVLRRLRGRISCTDCGTIYNKLYCMPKINGVCDICNSSSFQNRVDDDESIIKLRLESYKKETLPLLEFYKAQNKLTLIDANQSTENILKKIKKMSGIY.

Residue glycine 10–threonine 15 participates in ATP binding. The segment at serine 28–valine 57 is NMP. AMP-binding positions include arginine 34, lysine 55–valine 57, glycine 83–arginine 86, and glutamine 90. The interval glycine 120–aspartate 158 is LID. Arginine 121 contributes to the ATP binding site. The Zn(2+) site is built by cysteine 124 and cysteine 127. Residue isoleucine 130–tyrosine 131 coordinates ATP. Zn(2+)-binding residues include cysteine 144 and cysteine 147. Arginine 155 and arginine 166 together coordinate AMP. Glutamine 194 provides a ligand contact to ATP.

Belongs to the adenylate kinase family. Monomer.

It localises to the cytoplasm. The enzyme catalyses AMP + ATP = 2 ADP. Its pathway is purine metabolism; AMP biosynthesis via salvage pathway; AMP from ADP: step 1/1. Its function is as follows. Catalyzes the reversible transfer of the terminal phosphate group between ATP and AMP. Plays an important role in cellular energy homeostasis and in adenine nucleotide metabolism. The sequence is that of Adenylate kinase from Orientia tsutsugamushi (strain Boryong) (Rickettsia tsutsugamushi).